A 763-amino-acid polypeptide reads, in one-letter code: Thiamine biosynthesis multifunctional protein ThiED (763 aa).

A thiamine-phosphate synthase region spans residues 1–210 (MTDFSLYLVT…ANPAAAATRL (210 aa)). 4-amino-2-methyl-5-(diphosphooxymethyl)pyrimidine-binding positions include 37–41 (QLRDK) and N69. 2 residues coordinate Mg(2+): D70 and D88. Residue S107 participates in 4-amino-2-methyl-5-(diphosphooxymethyl)pyrimidine binding. Residue 140-142 (TAT) participates in 2-[(2R,5Z)-2-carboxy-4-methylthiazol-5(2H)-ylidene]ethyl phosphate binding. A 4-amino-2-methyl-5-(diphosphooxymethyl)pyrimidine-binding site is contributed by K143. Residues G174 and 194–195 (VS) contribute to the 2-[(2R,5Z)-2-carboxy-4-methylthiazol-5(2H)-ylidene]ethyl phosphate site. The hydroxymethylpyrimidine/phosphomethylpyrimidine kinase stretch occupies residues 245 to 500 (LSIAGTDPTG…GTGNGPVDHG (256 aa)). A 4-amino-5-hydroxymethyl-2-methylpyrimidine-binding site is contributed by Q282. The tract at residues 550–763 (FTRALWEASG…RHGWTMVGSS (214 aa)) is thiaminase-2.

This sequence in the N-terminal section; belongs to the thiamine-phosphate synthase family. The protein in the central section; belongs to the ThiD family. It in the C-terminal section; belongs to the thiaminase-2 family. Mg(2+) is required as a cofactor.

The enzyme catalyses 2-[(2R,5Z)-2-carboxy-4-methylthiazol-5(2H)-ylidene]ethyl phosphate + 4-amino-2-methyl-5-(diphosphooxymethyl)pyrimidine + 2 H(+) = thiamine phosphate + CO2 + diphosphate. It carries out the reaction 2-(2-carboxy-4-methylthiazol-5-yl)ethyl phosphate + 4-amino-2-methyl-5-(diphosphooxymethyl)pyrimidine + 2 H(+) = thiamine phosphate + CO2 + diphosphate. It catalyses the reaction 4-methyl-5-(2-phosphooxyethyl)-thiazole + 4-amino-2-methyl-5-(diphosphooxymethyl)pyrimidine + H(+) = thiamine phosphate + diphosphate. The catalysed reaction is 4-amino-5-hydroxymethyl-2-methylpyrimidine + ATP = 4-amino-2-methyl-5-(phosphooxymethyl)pyrimidine + ADP + H(+). The enzyme catalyses 4-amino-2-methyl-5-(phosphooxymethyl)pyrimidine + ATP = 4-amino-2-methyl-5-(diphosphooxymethyl)pyrimidine + ADP. It functions in the pathway cofactor biosynthesis; thiamine diphosphate biosynthesis; 4-amino-2-methyl-5-diphosphomethylpyrimidine from 5-amino-1-(5-phospho-D-ribosyl)imidazole: step 3/3. The protein operates within cofactor biosynthesis; thiamine diphosphate biosynthesis; thiamine phosphate from 4-amino-2-methyl-5-diphosphomethylpyrimidine and 4-methyl-5-(2-phosphoethyl)-thiazole: step 1/1. In terms of biological role, condenses 4-methyl-5-(beta-hydroxyethyl)thiazole monophosphate (THZ-P) and 2-methyl-4-amino-5-hydroxymethyl pyrimidine pyrophosphate (HMP-PP) to form thiamine monophosphate (TMP). Its function is as follows. Catalyzes the phosphorylation of hydroxymethylpyrimidine phosphate (HMP-P) to HMP-PP, and of HMP to HMP-P. This is Thiamine biosynthesis multifunctional protein ThiED (theD) from Corynebacterium glutamicum (strain ATCC 13032 / DSM 20300 / JCM 1318 / BCRC 11384 / CCUG 27702 / LMG 3730 / NBRC 12168 / NCIMB 10025 / NRRL B-2784 / 534).